A 737-amino-acid chain; its full sequence is Transcriptional repressor CTCF (737 aa).

Position 1 is an N-acetylmethionine (Met1). A Glycyl lysine isopeptide (Lys-Gly) (interchain with G-Cter in SUMO2) cross-link involves residue Lys18. Residue Lys74 forms a Glycyl lysine isopeptide (Lys-Gly) (interchain with G-Cter in SUMO) linkage. A disordered region spans residues 180–211 (QGELPPQEDPSWQKDPDYQPPAKKTKKTKKSK). The span at 202-211 (KKTKKTKKSK) shows a compositional bias: basic residues. A Glycyl lysine isopeptide (Lys-Gly) (interchain with G-Cter in SUMO2) cross-link involves residue Lys219. Residues 266–288 (FQCELCSYTCPRRSNLDRHMKSH) form a C2H2-type 1 zinc finger. At Thr289 the chain carries Phosphothreonine. The C2H2-type 2 zinc-finger motif lies at 294 to 316 (HKCHLCGRAFRTVTLLRNHLNTH). Thr317 is subject to Phosphothreonine. 2 C2H2-type zinc fingers span residues 322–345 (HKCPDCDMAFVTSGELVRHRRYKH) and 351–373 (FKCSMCDYASVEVSKLKRHIRSH). Phosphothreonine is present on Thr374. The segment at 379-401 (FQCSLCSYASRDTYKLKRHMRTH) adopts a C2H2-type 5 zinc-finger fold. Position 402 is a phosphoserine (Ser402). 5 consecutive C2H2-type zinc fingers follow at residues 407–430 (YECYICHARFTQSGTMKMHILQKH), 437–460 (FHCPHCDTVIARKSDLGVHLRKQH), 467–489 (KKCRYCDAVFHERYALIQHQKSH), 495–517 (FKCDQCDYACRQERHMIMHKRTH), and 523–546 (YACSHCDKTFRQKQLLDMHFKRYH). Residues 555–577 (FVCSKCGKTFTRRNTMARHADNC) form a C2H2-type 11; atypical zinc finger. Disordered stretches follow at residues 573-687 (HADN…EDQN) and 699-727 (KKEPDAEPAEGEEEEAQAAPADAPNGDLT). A compositionally biased stretch (basic residues) spans 593–604 (KSKRGRKRKMRS). Phosphoserine occurs at positions 609, 610, and 612. A compositionally biased stretch (acidic residues) spans 610–636 (SDSENAEPDLDDNEEEEEPAVEIEPEP). Over residues 637-657 (EPQPQPQPQPQPQPVAPAPPP) the composition is skewed to pro residues. Polar residues predominate over residues 668-687 (RTNQPKQNQPTAIIQVEDQN). Lys699 is covalently cross-linked (Glycyl lysine isopeptide (Lys-Gly) (interchain with G-Cter in SUMO); alternate). A Glycyl lysine isopeptide (Lys-Gly) (interchain with G-Cter in SUMO2); alternate cross-link involves residue Lys699. Residues 704–714 (AEPAEGEEEEA) show a composition bias toward acidic residues.

It belongs to the CTCF zinc-finger protein family. Interacts with CHD8. Interacts with LLPH. Interacts with CENPE. Interacts with BRD2; promoting BRD2 recruitment to chromatin. Sumoylated on Lys-74 and Lys-699; sumoylation of CTCF contributes to the repressive function of CTCF on the MYC P2 promoter.

It localises to the nucleus. The protein localises to the nucleoplasm. Its subcellular location is the chromosome. The protein resides in the centromere. In terms of biological role, chromatin binding factor that binds to DNA sequence specific sites and regulates the 3D structure of chromatin. Binds together strands of DNA, thus forming chromatin loops, and anchors DNA to cellular structures, such as the nuclear lamina. Defines the boundaries between active and heterochromatic DNA via binding to chromatin insulators, thereby preventing interaction between promoter and nearby enhancers and silencers. Plays a critical role in the epigenetic regulation. Participates in the allele-specific gene expression at the imprinted IGF2/H19 gene locus. On the maternal allele, binding within the H19 imprinting control region (ICR) mediates maternally inherited higher-order chromatin conformation to restrict enhancer access to IGF2. Mediates interchromosomal association between IGF2/H19 and WSB1/NF1 and may direct distant DNA segments to a common transcription factory. Regulates asynchronous replication of IGF2/H19. Plays a critical role in gene silencing over considerable distances in the genome. Preferentially interacts with unmethylated DNA, preventing spreading of CpG methylation and maintaining methylation-free zones. Inversely, binding to target sites is prevented by CpG methylation. Plays an important role in chromatin remodeling. Can dimerize when it is bound to different DNA sequences, mediating long-range chromatin looping. Causes local loss of histone acetylation and gain of histone methylation in the beta-globin locus, without affecting transcription. When bound to chromatin, it provides an anchor point for nucleosomes positioning. Seems to be essential for homologous X-chromosome pairing. May participate with Tsix in establishing a regulatable epigenetic switch for X chromosome inactivation. May play a role in preventing the propagation of stable methylation at the escape genes from X-inactivation. Involved in sister chromatid cohesion. Associates with both centromeres and chromosomal arms during metaphase and required for cohesin localization to CTCF sites. Plays a role in the recruitment of CENPE to the pericentromeric/centromeric regions of the chromosome during mitosis. Acts as a transcriptional repressor binding to promoters of vertebrate MYC gene and BAG1 gene. Also binds to the PLK and PIM1 promoters. Acts as a transcriptional activator of APP. Regulates APOA1/C3/A4/A5 gene cluster and controls MHC class II gene expression. Plays an essential role in oocyte and preimplantation embryo development by activating or repressing transcription. Seems to act as tumor suppressor. The chain is Transcriptional repressor CTCF (Ctcf) from Rattus norvegicus (Rat).